Consider the following 656-residue polypeptide: tRNA(Met) cytidine acetyltransferase TmcA (656 aa).

Residues Q145, G167–M176, and R291 contribute to the ATP site. The 175-residue stretch at S368 to K542 folds into the N-acetyltransferase domain. Acetyl-CoA contacts are provided by residues I474–V476, Q481–Q487, and E510.

The protein belongs to the RNA cytidine acetyltransferase family. TmcA subfamily.

It localises to the cytoplasm. The catalysed reaction is cytidine(34) in elongator tRNA(Met) + acetyl-CoA + ATP + H2O = N(4)-acetylcytidine(34) in elongator tRNA(Met) + ADP + phosphate + CoA + H(+). Functionally, catalyzes the formation of N(4)-acetylcytidine (ac(4)C) at the wobble position of tRNA(Met), by using acetyl-CoA as an acetyl donor and ATP (or GTP). This is tRNA(Met) cytidine acetyltransferase TmcA from Haemophilus influenzae (strain ATCC 51907 / DSM 11121 / KW20 / Rd).